The primary structure comprises 491 residues: Probable cysteine proteinase 024R (491 aa).

Catalysis depends on residues Cys132, His325, and Asn355. The chain crosses the membrane as a helical span at residues 467 to 487 (ALDLALLVLPALLIVIVVLIG).

The protein belongs to the peptidase C1 family.

Its subcellular location is the membrane. In terms of biological role, probable cysteine protease. This Invertebrate iridescent virus 3 (IIV-3) protein is Probable cysteine proteinase 024R.